Reading from the N-terminus, the 672-residue chain is Glycine--tRNA ligase beta subunit (672 aa).

This sequence belongs to the class-II aminoacyl-tRNA synthetase family. As to quaternary structure, tetramer of two alpha and two beta subunits.

Its subcellular location is the cytoplasm. The catalysed reaction is tRNA(Gly) + glycine + ATP = glycyl-tRNA(Gly) + AMP + diphosphate. This is Glycine--tRNA ligase beta subunit from Thermotoga petrophila (strain ATCC BAA-488 / DSM 13995 / JCM 10881 / RKU-1).